Reading from the N-terminus, the 289-residue chain is Probable branched-chain-amino-acid aminotransferase (289 aa).

Residue Lys154 is modified to N6-(pyridoxal phosphate)lysine.

Belongs to the class-IV pyridoxal-phosphate-dependent aminotransferase family. Pyridoxal 5'-phosphate serves as cofactor.

The catalysed reaction is L-leucine + 2-oxoglutarate = 4-methyl-2-oxopentanoate + L-glutamate. The enzyme catalyses L-isoleucine + 2-oxoglutarate = (S)-3-methyl-2-oxopentanoate + L-glutamate. It catalyses the reaction L-valine + 2-oxoglutarate = 3-methyl-2-oxobutanoate + L-glutamate. Its pathway is amino-acid biosynthesis; L-isoleucine biosynthesis; L-isoleucine from 2-oxobutanoate: step 4/4. The protein operates within amino-acid biosynthesis; L-leucine biosynthesis; L-leucine from 3-methyl-2-oxobutanoate: step 4/4. It functions in the pathway amino-acid biosynthesis; L-valine biosynthesis; L-valine from pyruvate: step 4/4. In terms of biological role, acts on leucine, isoleucine and valine. The polypeptide is Probable branched-chain-amino-acid aminotransferase (ilvE) (Rickettsia bellii (strain RML369-C)).